Consider the following 1436-residue polypeptide: Gag-Pol polyprotein (1436 aa).

Gly2 carries N-myristoyl glycine; by host lipidation. The segment at 7 to 31 (VLSGGKLDAWEKIRLRPGGRKKYRL) is interaction with Gp41. The interaction with host CALM1 stretch occupies residues 8 to 43 (LSGGKLDAWEKIRLRPGGRKKYRLKHLVWASRELER). The interaction with host AP3D1 stretch occupies residues 12–19 (KLDAWEKI). The interval 14-33 (DAWEKIRLRPGGRKKYRLKH) is interaction with membrane phosphatidylinositol 4,5-bisphosphate and RNA. Residues 16-22 (WEKIRLR) carry the Nuclear export signal motif. The short motif at 26 to 32 (RKKYRLK) is the Nuclear localization signal element. Residues 73–77 (EDLQS) are interaction with membrane phosphatidylinositol 4,5-bisphosphate. Positions 110–129 (KNKQRTQQAPAAADKEKDSK) are disordered. A Phosphotyrosine; by host modification is found at Tyr134. The segment at 191 to 229 (NTVGGHQAAMQMLKDTINEEAAEWDRLHPVHAGPIPPGQ) is interaction with human PPIA/CYPA and NUP153. Positions 279–365 (YSPVSILDIK…GGPSHKARVL (87 aa)) are dimerization/Multimerization of capsid protein p24. 2 CCHC-type zinc fingers span residues 393-410 (VKCSNCGKEGHIARNCRA) and 414-431 (KGCWKCGQEGHQMKDCTG). 2 stretches are compositionally biased toward basic and acidic residues: residues 447-457 (KAREFPPEEAR) and 464-475 (RELRVRRGDHPL). A disordered region spans residues 447-482 (KAREFPPEEARANSPTSRELRVRRGDHPLSEAGAER). The tract at residues 490-494 (PQITL) is dimerization of protease. The 70-residue stretch at 509-578 (KEALLDTGAD…TPVNIIGRNI (70 aa)) folds into the Peptidase A2 domain. The active-site For protease activity; shared with dimeric partner is the Asp514. 2 dimerization of protease regions span residues 538–544 (GIGGFIK) and 577–589 (NILTQMGCTLNLP). A Reverse transcriptase domain is found at 632–822 (EGKISKIGPE…PPFLWMGYEL (191 aa)). Residues Asp698, Asp773, and Asp774 each contribute to the Mg(2+) site. Residues 815 to 823 (FLWMGYELH) are RT 'primer grip'. The short motif at 986–1002 (WETWWTEHWQATWIPEW) is the Tryptophan repeat motif element. The 124-residue stretch at 1022-1145 (IEGAETYYVD…VDKLVSSGIR (124 aa)) folds into the RNase H type-1 domain. Mg(2+) contacts are provided by Asp1031, Glu1066, Asp1086, and Asp1137. Residues 1151 to 1192 (DGIDKAQVQHEKYHSNWRAMASDFNLPPIVAKEIVASCDKCQ) form an Integrase-type zinc finger. His1160, His1164, Cys1188, and Cys1191 together coordinate Zn(2+). The 151-residue stretch at 1202–1352 (VDCSPGIWQL…SARERIIDII (151 aa)) folds into the Integrase catalytic domain. Asp1212, Asp1264, and Glu1300 together coordinate Mg(2+). The segment at residues 1371–1418 (FRVYYRDSRDPIWKGPAKLLWKGEGAVVIQDNSEIKVVPRRKAKIIRD) is a DNA-binding region (integrase-type).

In terms of assembly, homotrimer; further assembles as hexamers of trimers. Interacts with gp41 (via C-terminus). Interacts with host CALM1; this interaction induces a conformational change in the Matrix protein, triggering exposure of the myristate group. Interacts with host AP3D1; this interaction allows the polyprotein trafficking to multivesicular bodies during virus assembly. Part of the pre-integration complex (PIC) which is composed of viral genome, matrix protein, Vpr and integrase. As to quaternary structure, homodimer; the homodimer further multimerizes as homohexamers or homopentamers. Interacts with human PPIA/CYPA; This interaction stabilizes the capsid. Interacts with human NUP153. Interacts with host PDZD8; this interaction stabilizes the capsid. Interacts with monkey TRIM5; this interaction destabilizes the capsid. Homodimer, whose active site consists of two apposed aspartic acid residues. In terms of assembly, heterodimer of p66 RT and p51 RT (RT p66/p51). Heterodimerization of RT is essential for DNA polymerase activity. The overall folding of the subdomains is similar in p66 RT and p51 RT but the spatial arrangements of the subdomains are dramatically different. As to quaternary structure, homotetramer; may further associate as a homohexadecamer. Part of the pre-integration complex (PIC) which is composed of viral genome, matrix protein, Vpr and integrase. Interacts with human SMARCB1/INI1 and human PSIP1/LEDGF isoform 1. Interacts with human KPNA3; this interaction might play a role in nuclear import of the pre-integration complex. Interacts with human NUP153; this interaction might play a role in nuclear import of the pre-integration complex. It depends on Mg(2+) as a cofactor. In terms of processing, specific enzymatic cleavages by the viral protease yield mature proteins. The protease is released by autocatalytic cleavage. The polyprotein is cleaved during and after budding, this process is termed maturation. Proteolytic cleavage of p66 RT removes the RNase H domain to yield the p51 RT subunit. Nucleocapsid protein p7 might be further cleaved after virus entry. Post-translationally, tyrosine phosphorylated presumably in the virion by a host kinase. Phosphorylation is apparently not a major regulator of membrane association. Phosphorylated possibly by host MAPK1; this phosphorylation is necessary for Pin1-mediated virion uncoating. In terms of processing, methylated by host PRMT6, impairing its function by reducing RNA annealing and the initiation of reverse transcription.

It is found in the host cell membrane. The protein resides in the host endosome. Its subcellular location is the host multivesicular body. The protein localises to the virion membrane. It localises to the host nucleus. It is found in the host cytoplasm. The protein resides in the virion. It catalyses the reaction Specific for a P1 residue that is hydrophobic, and P1' variable, but often Pro.. It carries out the reaction Endohydrolysis of RNA in RNA/DNA hybrids. Three different cleavage modes: 1. sequence-specific internal cleavage of RNA. Human immunodeficiency virus type 1 and Moloney murine leukemia virus enzymes prefer to cleave the RNA strand one nucleotide away from the RNA-DNA junction. 2. RNA 5'-end directed cleavage 13-19 nucleotides from the RNA end. 3. DNA 3'-end directed cleavage 15-20 nucleotides away from the primer terminus.. The enzyme catalyses 3'-end directed exonucleolytic cleavage of viral RNA-DNA hybrid.. The catalysed reaction is DNA(n) + a 2'-deoxyribonucleoside 5'-triphosphate = DNA(n+1) + diphosphate. With respect to regulation, protease: The viral protease is inhibited by many synthetic protease inhibitors (PIs), such as amprenavir, atazanavir, indinavir, loprinavir, nelfinavir, ritonavir and saquinavir. Use of protease inhibitors in tritherapy regimens permit more ambitious therapeutic strategies. Reverse transcriptase/ribonuclease H: RT can be inhibited either by nucleoside RT inhibitors (NRTIs) or by non nucleoside RT inhibitors (NNRTIs). NRTIs act as chain terminators, whereas NNRTIs inhibit DNA polymerization by binding a small hydrophobic pocket near the RT active site and inducing an allosteric change in this region. Classical NRTIs are abacavir, adefovir (PMEA), didanosine (ddI), lamivudine (3TC), stavudine (d4T), tenofovir (PMPA), zalcitabine (ddC), and zidovudine (AZT). Classical NNRTIs are atevirdine (BHAP U-87201E), delavirdine, efavirenz (DMP-266), emivirine (I-EBU), and nevirapine (BI-RG-587). The tritherapies used as a basic effective treatment of AIDS associate two NRTIs and one NNRTI. Its function is as follows. Mediates, with Gag polyprotein, the essential events in virion assembly, including binding the plasma membrane, making the protein-protein interactions necessary to create spherical particles, recruiting the viral Env proteins, and packaging the genomic RNA via direct interactions with the RNA packaging sequence (Psi). Gag-Pol polyprotein may regulate its own translation, by the binding genomic RNA in the 5'-UTR. At low concentration, the polyprotein would promote translation, whereas at high concentration, the polyprotein would encapsidate genomic RNA and then shut off translation. In terms of biological role, targets the polyprotein to the plasma membrane via a multipartite membrane-binding signal, that includes its myristoylated N-terminus. Matrix protein is part of the pre-integration complex. Implicated in the release from host cell mediated by Vpu. Binds to RNA. Forms the conical core that encapsulates the genomic RNA-nucleocapsid complex in the virion. Most core are conical, with only 7% tubular. The core is constituted by capsid protein hexamer subunits. The core is disassembled soon after virion entry. Host restriction factors such as TRIM5-alpha or TRIMCyp bind retroviral capsids and cause premature capsid disassembly, leading to blocks in reverse transcription. Capsid restriction by TRIM5 is one of the factors which restricts HIV-1 to the human species. Host PIN1 apparently facilitates the virion uncoating. On the other hand, interactions with PDZD8 or CYPA stabilize the capsid. Functionally, encapsulates and protects viral dimeric unspliced genomic RNA (gRNA). Binds these RNAs through its zinc fingers. Acts as a nucleic acid chaperone which is involved in rearangement of nucleic acid secondary structure during gRNA retrotranscription. Also facilitates template switch leading to recombination. As part of the polyprotein, participates in gRNA dimerization, packaging, tRNA incorporation and virion assembly. Its function is as follows. Aspartyl protease that mediates proteolytic cleavages of Gag and Gag-Pol polyproteins during or shortly after the release of the virion from the plasma membrane. Cleavages take place as an ordered, step-wise cascade to yield mature proteins. This process is called maturation. Displays maximal activity during the budding process just prior to particle release from the cell. Also cleaves Nef and Vif, probably concomitantly with viral structural proteins on maturation of virus particles. Hydrolyzes host EIF4GI and PABP1 in order to shut off the capped cellular mRNA translation. The resulting inhibition of cellular protein synthesis serves to ensure maximal viral gene expression and to evade host immune response. Also mediates cleavage of host YTHDF3. Mediates cleavage of host CARD8, thereby activating the CARD8 inflammasome, leading to the clearance of latent HIV-1 in patient CD4(+) T-cells after viral reactivation; in contrast, HIV-1 can evade CARD8-sensing when its protease remains inactive in infected cells prior to viral budding. In terms of biological role, multifunctional enzyme that converts the viral RNA genome into dsDNA in the cytoplasm, shortly after virus entry into the cell. This enzyme displays a DNA polymerase activity that can copy either DNA or RNA templates, and a ribonuclease H (RNase H) activity that cleaves the RNA strand of RNA-DNA heteroduplexes in a partially processive 3' to 5' endonucleasic mode. Conversion of viral genomic RNA into dsDNA requires many steps. A tRNA(3)-Lys binds to the primer-binding site (PBS) situated at the 5'-end of the viral RNA. RT uses the 3' end of the tRNA primer to perform a short round of RNA-dependent minus-strand DNA synthesis. The reading proceeds through the U5 region and ends after the repeated (R) region which is present at both ends of viral RNA. The portion of the RNA-DNA heteroduplex is digested by the RNase H, resulting in a ssDNA product attached to the tRNA primer. This ssDNA/tRNA hybridizes with the identical R region situated at the 3' end of viral RNA. This template exchange, known as minus-strand DNA strong stop transfer, can be either intra- or intermolecular. RT uses the 3' end of this newly synthesized short ssDNA to perform the RNA-dependent minus-strand DNA synthesis of the whole template. RNase H digests the RNA template except for two polypurine tracts (PPTs) situated at the 5'-end and near the center of the genome. It is not clear if both polymerase and RNase H activities are simultaneous. RNase H probably can proceed both in a polymerase-dependent (RNA cut into small fragments by the same RT performing DNA synthesis) and a polymerase-independent mode (cleavage of remaining RNA fragments by free RTs). Secondly, RT performs DNA-directed plus-strand DNA synthesis using the PPTs that have not been removed by RNase H as primers. PPTs and tRNA primers are then removed by RNase H. The 3' and 5' ssDNA PBS regions hybridize to form a circular dsDNA intermediate. Strand displacement synthesis by RT to the PBS and PPT ends produces a blunt ended, linear dsDNA copy of the viral genome that includes long terminal repeats (LTRs) at both ends. Catalyzes viral DNA integration into the host chromosome, by performing a series of DNA cutting and joining reactions. This enzyme activity takes place after virion entry into a cell and reverse transcription of the RNA genome in dsDNA. The first step in the integration process is 3' processing. This step requires a complex comprising the viral genome, matrix protein, Vpr and integrase. This complex is called the pre-integration complex (PIC). The integrase protein removes 2 nucleotides from each 3' end of the viral DNA, leaving recessed CA OH's at the 3' ends. In the second step, the PIC enters cell nucleus. This process is mediated through integrase and Vpr proteins, and allows the virus to infect a non dividing cell. This ability to enter the nucleus is specific of lentiviruses, other retroviruses cannot and rely on cell division to access cell chromosomes. In the third step, termed strand transfer, the integrase protein joins the previously processed 3' ends to the 5' ends of strands of target cellular DNA at the site of integration. The 5'-ends are produced by integrase-catalyzed staggered cuts, 5 bp apart. A Y-shaped, gapped, recombination intermediate results, with the 5'-ends of the viral DNA strands and the 3' ends of target DNA strands remaining unjoined, flanking a gap of 5 bp. The last step is viral DNA integration into host chromosome. This involves host DNA repair synthesis in which the 5 bp gaps between the unjoined strands are filled in and then ligated. Since this process occurs at both cuts flanking the HIV genome, a 5 bp duplication of host DNA is produced at the ends of HIV-1 integration. Alternatively, Integrase may catalyze the excision of viral DNA just after strand transfer, this is termed disintegration. In Human immunodeficiency virus type 1 group M subtype H (isolate VI991) (HIV-1), this protein is Gag-Pol polyprotein (gag-pol).